A 348-amino-acid chain; its full sequence is uncharacterized protein (348 aa).

The NADP(+) site is built by Lys41 and Tyr170. Ser339 carries the phosphoserine modification.

The protein belongs to the NAD(P)-dependent epimerase/dehydratase family. Dihydroflavonol-4-reductase subfamily.

This is an uncharacterized protein from Saccharomyces cerevisiae (strain ATCC 204508 / S288c) (Baker's yeast).